A 226-amino-acid chain; its full sequence is Pathogenesis-related protein R minor form (226 aa).

The first 25 residues, 1 to 25, serve as a signal peptide directing secretion; that stretch reads MNFLKSFPFYAFLCFGQYFVAVTHA. Disulfide bonds link Cys-34/Cys-225, Cys-75/Cys-85, Cys-90/Cys-96, Cys-140/Cys-214, Cys-145/Cys-197, Cys-153/Cys-163, Cys-167/Cys-176, and Cys-177/Cys-184.

The protein belongs to the thaumatin family.

The protein localises to the vacuole. This chain is Pathogenesis-related protein R minor form, found in Nicotiana tabacum (Common tobacco).